Reading from the N-terminus, the 60-residue chain is Cytotoxin SP15c (60 aa).

Intrachain disulfides connect cysteine 3–cysteine 21, cysteine 14–cysteine 38, cysteine 42–cysteine 53, and cysteine 54–cysteine 59.

This sequence belongs to the three-finger toxin family. Short-chain subfamily. Type IA cytotoxin sub-subfamily. In terms of assembly, monomer in solution; Homodimer and oligomer in the presence of negatively charged lipids forming a pore with a size ranging between 20 and 30 Angstroms. Expressed by the venom gland.

Its subcellular location is the secreted. It is found in the target cell membrane. Its function is as follows. Shows cytolytic activity on many different cells by forming pore in lipid membranes. In vivo, increases heart rate or kills the animal by cardiac arrest. In addition, it binds to heparin with high affinity, interacts with Kv channel-interacting protein 1 (KCNIP1) in a calcium-independent manner, and binds to integrin alpha-V/beta-3 (ITGAV/ITGB3) with moderate affinity. This chain is Cytotoxin SP15c, found in Naja atra (Chinese cobra).